We begin with the raw amino-acid sequence, 52 residues long: Phospholamban (52 aa).

M1 carries the post-translational modification N-acetylmethionine. The Cytoplasmic portion of the chain corresponds to 1-31 (MDKVQYLTRSAIRRASTIEMPQQARQNLQNL). A Phosphoserine; by PKA and DMPK modification is found at S16. T17 bears the Phosphothreonine; by CaMK2 mark. The helical transmembrane segment at 32–52 (FINFCLILICLLLICIIVMLL) threads the bilayer. Residue C36 is the site of S-palmitoyl cysteine attachment.

It belongs to the phospholamban family. As to quaternary structure, homopentamer. Can also form heterooligomers with other sarcoplasmic/endoplasmic reticulum calcium ATPase (SERCA) regulators ARLN, ERLN, SLN and STRIT1/DWORF. Monomer. Interacts with HAX1. Interacts as a monomer with ATP2A2; the interaction decreases ATP2A2 Ca(2+) affinity. Interacts with VMP1; VMP1 competes with PLN and SLN to prevent them from forming an inhibitory complex with ATP2A2. Interacts with S100A1 in a Ca(2+)-dependent manner. Phosphorylation by DMPK may stimulate sarcoplasmic reticulum calcium uptake in cardiomyocytes. Phosphorylation by PKA abolishes the inhibition of ATP2A2-mediated calcium uptake. Phosphorylated at Thr-17 by CaMK2, and in response to beta-adrenergic stimulation. Post-translationally, palmitoylated by ZDHHC16, promoting formation of the homopentamer. In terms of processing, in elongated spermatids, proteolytically cleaved by SPPL2C which modulates intracellular Ca(2+) homeostasis. In terms of tissue distribution, heart.

The protein resides in the endoplasmic reticulum membrane. Its subcellular location is the sarcoplasmic reticulum membrane. It localises to the mitochondrion membrane. It is found in the membrane. Its function is as follows. Reversibly inhibits the activity of ATP2A2/SERCA2 in cardiac sarcoplasmic reticulum by decreasing the apparent affinity of the ATPase for Ca(2+). Binds preferentially to the ATP-bound E1 conformational form of ATP2A2 which predominates at low Ca(2+) concentrations during the diastolic phase of the cardiac cycle. Inhibits ATP2A2 Ca(2+) affinity by disrupting its allosteric activation by ATP. Modulates the contractility of the heart muscle in response to physiological stimuli via its effects on ATP2A2. Modulates calcium re-uptake during muscle relaxation and plays an important role in calcium homeostasis in the heart muscle. The degree of ATP2A2 inhibition depends on the oligomeric state of PLN. ATP2A2 inhibition is alleviated by PLN phosphorylation. Also inhibits the activity of ATP2A3/SERCA3. Controls intracellular Ca(2+) levels in elongated spermatids and may play a role in germ cell differentiation. In the thalamic reticular nucleus of the brain, plays a role in the regulation of sleep patterns and executive functioning. The protein is Phospholamban of Canis lupus familiaris (Dog).